We begin with the raw amino-acid sequence, 1285 residues long: Protein crumbs homolog 2 (1285 aa).

The N-terminal stretch at 1 to 28 (MALARPGTPDPQALASVLLLLLWAPALS) is a signal peptide. A required for maximum inhibition of APP amyloid-beta peptide secretion region spans residues 1–350 (MALARPGTPD…GFQCHCPDGY (350 aa)). An EGF-like 1 domain is found at 67–106 (EPRGCATQPCHHGALCVPQGPDPTGFRCYCVPGFQGPRCE). Disulfide bonds link Cys-71-Cys-82, Cys-76-Cys-94, Cys-96-Cys-105, Cys-112-Cys-123, Cys-117-Cys-132, Cys-134-Cys-143, Cys-150-Cys-161, Cys-155-Cys-170, Cys-172-Cys-181, Cys-188-Cys-199, Cys-193-Cys-208, Cys-210-Cys-220, Cys-227-Cys-238, Cys-232-Cys-247, Cys-249-Cys-258, Cys-265-Cys-276, Cys-270-Cys-306, Cys-308-Cys-317, Cys-324-Cys-335, Cys-329-Cys-344, Cys-346-Cys-355, Cys-362-Cys-373, Cys-367-Cys-382, Cys-384-Cys-393, Cys-400-Cys-411, Cys-405-Cys-424, and Cys-426-Cys-435. The 37-residue stretch at 108-144 (DIDECASRPCHHGATCRNLADRYECHCPLGYAGVTCE) folds into the EGF-like 2; calcium-binding domain. In terms of domain architecture, EGF-like 3; calcium-binding spans 146–182 (EVDECASAPCLHGGSCLDGVGSFRCVCAPGYGGTRCQ). The region spanning 184 to 221 (DLDECQSQPCAHGGTCHDLVNGFRCDCAGTGYEGTHCE) is the EGF-like 4; calcium-binding domain. 2 consecutive EGF-like domains span residues 223-259 (EVLE…ELCE) and 261-318 (DEDE…ADCG). An N-linked (GlcNAc...) asparagine glycan is attached at Asn-235. Ser-267 carries an O-linked (Glc...) serine glycan. Residues 320 to 356 (EVDECASRPCLNGGHCQDLPNGFQCHCPDGYAGPTCE) form the EGF-like 7; calcium-binding domain. The region spanning 358–394 (DVDECLSDPCLHGGTCSDTVAGYICRCPETWGGRDCS) is the EGF-like 8; calcium-binding domain. One can recognise an EGF-like 9 domain in the interval 396 to 436 (QLTGCQGHTCPLAATCIPIFESGVHSYVCHCPPGTHGPFCG). Residues 431 to 603 (HGPFCGQNTT…DLGENVLLGC (173 aa)) form the Laminin G-like 1 domain. Asn-438 and Asn-478 each carry an N-linked (GlcNAc...) asparagine glycan. Intrachain disulfides connect Cys-579–Cys-603, Cys-609–Cys-620, Cys-614–Cys-629, and Cys-631–Cys-640. Positions 605–641 (RREQCRPLPCVHGGSCVDLWTHFRCDCARPHRGPTCA) constitute an EGF-like 10 domain. One can recognise a Laminin G-like 2 domain in the interval 647 to 805 (ATFGLGGAPS…RQSWNLTAGC (159 aa)). Asn-669, Asn-690, Asn-786, and Asn-800 each carry an N-linked (GlcNAc...) asparagine glycan. Cystine bridges form between Cys-766-Cys-805, Cys-811-Cys-822, Cys-816-Cys-831, and Cys-833-Cys-842. The region spanning 807–843 (SEDMCSPDPCFNGGTCLVTWNDFHCTCPANFTGPTCA) is the EGF-like 11 domain. N-linked (GlcNAc...) asparagine glycosylation is found at Asn-836, Asn-886, Asn-926, and Asn-1009. The region spanning 871–1054 (EATFREGPPA…PGTPAPILGC (184 aa)) is the Laminin G-like 3 domain. 13 disulfide bridges follow: Cys-1013/Cys-1054, Cys-1060/Cys-1071, Cys-1065/Cys-1080, Cys-1082/Cys-1091, Cys-1098/Cys-1108, Cys-1103/Cys-1118, Cys-1120/Cys-1129, Cys-1138/Cys-1150, Cys-1144/Cys-1159, Cys-1161/Cys-1170, Cys-1177/Cys-1188, Cys-1182/Cys-1197, and Cys-1199/Cys-1208. 4 EGF-like domains span residues 1056–1092 (GAPV…PRCE), 1094–1130 (HVDP…PRCR), 1134–1171 (PSKE…QRCQ), and 1173–1209 (PTLP…QFCE). Residues Asn-1141 and Asn-1158 are each glycosylated (N-linked (GlcNAc...) asparagine). A helical membrane pass occupies residues 1225 to 1245 (VAVPAACACLLLLLLGLLSGI). An interaction with EPB41L5 region spans residues 1249–1285 (RKRRQSEGTYSPSQQEVAGARLEMDSVLKVPPEERLI).

Belongs to the Crumbs protein family. As to quaternary structure, associates with the gamma-secretase complex via interaction (via the transmembrane domain) with PSEN1/PS1. Interacts (via intracellular domain) with EPB41L5. Interacts with PALS1. O-glucosylated by POGLUT1 at Ser-267; consists of an O-glucose trisaccharide, in which the O-glucose is elongated by the addition of two xylose residues. O-glucosylation is required for localization at the plasma membrane. Post-translationally, N-glycosylated. In terms of tissue distribution, expressed in glomeruli, podocytes of the glomerular capillary loops, and parietal glomerular epithelial cells in the kidney (at protein level). Expressed in retina, fetal eye and brain. Also expressed in kidney, RPE/choroid, and at low levels in lung, placenta, and heart.

It is found in the apical cell membrane. It localises to the cytoplasm. The protein resides in the cell junction. Its subcellular location is the secreted. In terms of biological role, apical polarity protein that plays a central role during the epithelial-to-mesenchymal transition (EMT) at gastrulation, when newly specified mesodermal cells move inside the embryo. Acts by promoting cell ingression, the process by which cells leave the epithelial epiblast and move inside the embryo to form a new tissue layer. The anisotropic distribution of CRB2 and MYH10/myosin-IIB at cell edges define which cells will ingress: cells with high apical CRB2 are probably extruded from the epiblast by neighboring cells with high levels of apical MYH10/myosin-IIB. Plays a role in the maintenance of retinal neuroepithelium organization, structural integrity, adhesion, photoreceptor polarity and retinal photoreceptor layer thickness. May play a role in determining the length of cone photoreceptor outer segments and proliferation of late-born progenitor cells. Also required for maintenance of the apical polarity complex during development of the cortex. Inhibits gamma-secretase-dependent cleavage of APP and secretion of amyloid-beta peptide 40 and amyloid-beta peptide 42, and thereby inhibits gamma-secretase-dependent Notch transcription. This chain is Protein crumbs homolog 2, found in Homo sapiens (Human).